The following is a 699-amino-acid chain: Proline-rich receptor-like protein kinase PERK7 (699 aa).

A disordered region spans residues 1-167 (MAEGQSPENS…TSNSGSNSSS (167 aa)). Residues 1 to 172 (MAEGQSPENS…SNSSSNDGLN (172 aa)) lie on the Extracellular side of the membrane. 2 stretches are compositionally biased toward pro residues: residues 9 to 23 (NSPP…PSPP) and 43 to 68 (SPPP…PPLP). Asn-70 is a glycosylation site (N-linked (GlcNAc...) asparagine). Low complexity predominate over residues 100-121 (PPQQSDNNGNKGNNNENNKGND). The N-linked (GlcNAc...) asparagine glycan is linked to Asn-131. The segment covering 148–158 (HSQPRSLAPPT) has biased composition (polar residues). Asn-164 is a glycosylation site (N-linked (GlcNAc...) asparagine). The chain crosses the membrane as a helical span at residues 173-193 (IGAVIGLVAAAGILFIVMILL). Residues 194–699 (CVCCFRKKKK…SKTTTTNRGI (506 aa)) lie on the Cytoplasmic side of the membrane. A Phosphothreonine modification is found at Thr-325. In terms of domain architecture, Protein kinase spans 336–615 (FSKDRLLGQG…VRTLEGDASL (280 aa)). ATP-binding positions include 342–350 (LGQGGFGYV) and Lys-364. Tyr-410 bears the Phosphotyrosine mark. Asp-461 (proton acceptor) is an active-site residue. Ser-465 and Ser-494 each carry phosphoserine. 2 positions are modified to phosphothreonine: Thr-495 and Thr-500. A Phosphotyrosine modification is found at Tyr-508. Disordered regions lie at residues 609-639 (LEGD…DYEM) and 658-699 (DYGA…NRGI). Residues 687 to 699 (GSTSKTTTTNRGI) show a composition bias toward polar residues.

This sequence belongs to the protein kinase superfamily. Ser/Thr protein kinase family. As to expression, mostly expressed in flower buds.

It localises to the cell membrane. The catalysed reaction is L-seryl-[protein] + ATP = O-phospho-L-seryl-[protein] + ADP + H(+). The enzyme catalyses L-threonyl-[protein] + ATP = O-phospho-L-threonyl-[protein] + ADP + H(+). This Arabidopsis thaliana (Mouse-ear cress) protein is Proline-rich receptor-like protein kinase PERK7 (PERK7).